A 172-amino-acid polypeptide reads, in one-letter code: Translationally-controlled tumor protein (172 aa).

Residues 1–172 (MIIYRDLISH…FKDGLEMEKC (172 aa)) form the TCTP domain. A Phosphoserine; by PLK1 modification is found at serine 46. Serine 53 bears the Phosphoserine mark. Residue serine 64 is modified to Phosphoserine; by PLK1. The tract at residues 70-172 (VDIVMNHHLQ…FKDGLEMEKC (103 aa)) is required for reduction of TSC22D1 protein stability.

The protein belongs to the TCTP family. Homodimer. Interacts with STEAP3. Interacts with TSC22D1; interaction results in the destabilization of TSC22D1 protein.

It is found in the cytoplasm. Its function is as follows. Involved in calcium binding and microtubule stabilization. Acts as a negative regulator of TSC22D1-mediated apoptosis, via interaction with and destabilization of TSC22D1 protein. The sequence is that of Translationally-controlled tumor protein (TPT1) from Oryctolagus cuniculus (Rabbit).